Reading from the N-terminus, the 480-residue chain is DnaJ homolog subfamily A member 3, mitochondrial (480 aa).

Omega-N-methylarginine; by CARM1 is present on Arg58. Positions 93 to 158 (DYYQILGVPR…VKRKQYDAYG (66 aa)) constitute a J domain. N6-acetyllysine is present on Lys134. The segment at 223-301 (GVNKEFTVNI…CRGAGQAKQK (79 aa)) adopts a CR-type zinc-finger fold. Cys236 is a Zn(2+) binding site. CXXCXGXG motif repeat units follow at residues 236–243 (CERCDGKG), 253–260 (CHYCGGSG), 275–282 (CRRCGGRG), and 289–296 (CVVCRGAG). Arg238 is modified (omega-N-methylarginine; by CARM1). The Zn(2+) site is built by Cys239, Cys253, Cys256, Cys275, Cys278, Cys289, and Cys292. Omega-N-methylarginine; by CARM1 is present on Arg293. Ser398 is modified (phosphoserine). The disordered stretch occupies residues 437 to 468 (TVNGVTHTSTGGRTMDSSAGSKDRREAGEDNE). Polar residues predominate over residues 439-456 (NGVTHTSTGGRTMDSSAG).

In terms of assembly, interacts with JAK2, HSPA9B and IFN-gammaR2 chain. Interacts with Ras GTPase-activating protein 1 (RASA1). Isoform 2 interacts with MUSK (via the cytoplasmic domain). Post-translationally, tyrosine phosphorylated.

Its subcellular location is the mitochondrion matrix. The protein localises to the cytoplasm. It is found in the cytosol. The protein resides in the postsynaptic cell membrane. Its function is as follows. Modulates apoptotic signal transduction or effector structures within the mitochondrial matrix. Affect cytochrome C release from the mitochondria and caspase 3 activation, but not caspase 8 activation. Isoform 1 increases apoptosis triggered by both TNF and the DNA-damaging agent mytomycin C; in sharp contrast, isoform 2 suppresses apoptosis. Can modulate IFN-gamma-mediated transcriptional activity. Isoform 2 may play a role in neuromuscular junction development as an effector of the MUSK signaling pathway. The polypeptide is DnaJ homolog subfamily A member 3, mitochondrial (Dnaja3) (Mus musculus (Mouse)).